Reading from the N-terminus, the 609-residue chain is Mitogen-activated protein kinase kinase kinase 3 (609 aa).

The disordered stretch occupies residues 1-202; it reads MPTWWGRKSC…SAVHGSRIGG (202 aa). Over residues 11–28 the composition is skewed to basic and acidic residues; that stretch reads KNKDDNHRGIISTDRDIK. 2 stretches are compositionally biased toward low complexity: residues 40–64 and 90–108; these read PTRG…GFDS and VSGS…SSGS. A Protein kinase domain is found at 214-470; sequence WKKGKFLGSG…ASQLLEHPFL (257 aa). Residues 220-228 and Lys-243 contribute to the ATP site; that span reads LGSGTFGQV. Residue Asp-339 is the Proton acceptor of the active site. Disordered stretches follow at residues 487–511 and 590–609; these read PRSY…SHDN and MEPS…SRLV. Polar residues predominate over residues 594-609; it reads SFRTQTPNSPLRSRLV.

It belongs to the protein kinase superfamily. STE Ser/Thr protein kinase family. MAP kinase kinase kinase subfamily. Interacts with PBL27. Expressed in flower buds, roots, leaves, seedlings, stems and immature siliques. Absent of mature pollen.

The enzyme catalyses L-seryl-[protein] + ATP = O-phospho-L-seryl-[protein] + ADP + H(+). It catalyses the reaction L-threonyl-[protein] + ATP = O-phospho-L-threonyl-[protein] + ADP + H(+). The chain is Mitogen-activated protein kinase kinase kinase 3 from Arabidopsis thaliana (Mouse-ear cress).